Consider the following 403-residue polypeptide: MTQTVNEREDPLNLGGGGWASSIPLRTWSSYHRRQRGAPVSKRRYRDGPKIEYEASRKQPKQQRSPGSWFQPSRGPYWALYSNWERCGGPWRPPLIAFQSPLCPAQMIRAYGLHPLCVCCCSCWSGPWNPGWERPPGRKKRWGRRGRGLRRHPRRSFPRNPPIDLSKMLRPVNLSGWRAPGMRAPRNTTQFIMNQVYEDMRQQEKLERQQAALRAQQAQEGGISPGDSTTNDAPHSGVEEDSQLPEDLYGFMQDPSLTFSPALMQHNQSPTPGLVEEEEKNVDDDECDVEVCDEKEESEEEEEEEVDRGSEDEDVDEEEVEAAGNGEEGEEDQEEEYMLEETGLEEGEQRAEEKFLPLGMPLSILVGDEEERENFMNYDYLSQEQIIPNVPEADLFMVPDISH.

Positions 1–11 (MTQTVNEREDP) are enriched in basic and acidic residues. Disordered stretches follow at residues 1–23 (MTQT…ASSI), 51–70 (IEYE…GSWF), 134–164 (RPPG…PPID), 202–241 (QQEK…VEED), and 261–350 (PALM…GEQR). Residues 137-157 (GRKKRWGRRGRGLRRHPRRSF) are compositionally biased toward basic residues. The span at 209–220 (QQAALRAQQAQE) shows a compositional bias: low complexity. Residues 261–271 (PALMQHNQSPT) are compositionally biased toward polar residues. A compositionally biased stretch (acidic residues) spans 275 to 346 (VEEEEKNVDD…YMLEETGLEE (72 aa)). A coiled-coil region spans residues 292–353 (CDEKEESEEE…LEEGEQRAEE (62 aa)).

In terms of tissue distribution, expressed in testis.

Its subcellular location is the nucleus. Its function is as follows. Regulator of histone epigenetic modifications and chromatin compaction into the sperm head, required for histone-to-protamine (HTP) transition. HTP is a key event in which somatic histones are first replaced by testis-specific histone variants, then transition proteins (TNPs) are incorporated into the spermatid nucleus, and finally protamines (PRMs) replace the TNPs to promote chromatin condensation. The polypeptide is Coiled-coil domain-containing glutamate-rich protein 1 (Ccer1) (Mus musculus (Mouse)).